Reading from the N-terminus, the 198-residue chain is Nucleoid occlusion factor SlmA (198 aa).

The HTH tetR-type domain maps to 9–70 (RNRREEILQA…SLIEFIEDSL (62 aa)). A DNA-binding region (H-T-H motif) is located at residues 33–52 (TTAKLAANVGVSEAALYRHF). Positions 119–144 (DRLQGRINQLFERIEVQLRQVLREKK) form a coiled coil.

This sequence belongs to the nucleoid occlusion factor SlmA family. In terms of assembly, homodimer. Interacts with FtsZ.

It is found in the cytoplasm. The protein resides in the nucleoid. Its function is as follows. Required for nucleoid occlusion (NO) phenomenon, which prevents Z-ring formation and cell division over the nucleoid. Acts as a DNA-associated cell division inhibitor that binds simultaneously chromosomal DNA and FtsZ, and disrupts the assembly of FtsZ polymers. SlmA-DNA-binding sequences (SBS) are dispersed on non-Ter regions of the chromosome, preventing FtsZ polymerization at these regions. This Yersinia enterocolitica serotype O:8 / biotype 1B (strain NCTC 13174 / 8081) protein is Nucleoid occlusion factor SlmA.